Consider the following 165-residue polypeptide: Nucleoside-triphosphatase THEP1 (165 aa).

Residues 7 to 14 and 93 to 100 contribute to the ATP site; these read GRPGVGKT and LVIIDEVG.

It belongs to the THEP1 NTPase family.

The enzyme catalyses a ribonucleoside 5'-triphosphate + H2O = a ribonucleoside 5'-diphosphate + phosphate + H(+). Its function is as follows. Has nucleotide phosphatase activity towards ATP, GTP, CTP, TTP and UTP. May hydrolyze nucleoside diphosphates with lower efficiency. This is Nucleoside-triphosphatase THEP1 from Archaeoglobus fulgidus (strain ATCC 49558 / DSM 4304 / JCM 9628 / NBRC 100126 / VC-16).